The primary structure comprises 477 residues: Argininosuccinate lyase (477 aa).

It belongs to the lyase 1 family. Argininosuccinate lyase subfamily.

It is found in the cytoplasm. It carries out the reaction 2-(N(omega)-L-arginino)succinate = fumarate + L-arginine. Its pathway is amino-acid biosynthesis; L-arginine biosynthesis; L-arginine from L-ornithine and carbamoyl phosphate: step 3/3. In Acinetobacter baumannii (strain AB307-0294), this protein is Argininosuccinate lyase.